We begin with the raw amino-acid sequence, 1783 residues long: Collagen alpha-1(XXVII) chain A (1783 aa).

The first 35 residues, 1 to 35 (MNLATRRRVRRTSRLVAKRALLLCILLYCTSFGFT), serve as a signal peptide directing secretion. The Laminin G-like domain maps to 73–235 (TTRARVTTPT…NICSAIRRQC (163 aa)). Disordered regions lie at residues 288–312 (SSSV…LALM), 327–524 (HKPS…PRTP), 553–744 (VGAP…APGP), 772–1461 (PGNM…GDIG), and 1512–1546 (GNPG…LPGP). A compositionally biased stretch (low complexity) spans 403-415 (KPTSVPKPNPTKN). Positions 436–447 (LPAPKPTVPKRP) are enriched in pro residues. A compositionally biased stretch (polar residues) spans 462–494 (HTTPLTPKSTLAPNSTSKKPLPTLKSTSFTTAA). Residues 553 to 1547 (VGAPGLKGDQ…RGPPGLPGPP (995 aa)) are triple-helical region. A Collagen-like 1 domain is found at 554–608 (GAPGLKGDQGESGLPGPPGKPGQPGMRGPRGPPGPHGKPGRPGPTGLKGKKGDPG). Composition is skewed to low complexity over residues 622-633 (VGLPGPVGLVGV), 651-661 (EPGEQGPVGEA), 735-744 (EPGVIGAPGP), 817-829 (PGPQ…IGPS), and 861-870 (ARGLPGPRGA). Collagen-like domains are found at residues 818 to 873 (GPQG…AAGR) and 845 to 902 (GKPG…GALG). Residues 926-935 (GFIGPGGEAG) show a composition bias toward gly residues. The segment covering 967–976 (GGPPGPPGSP) has biased composition (pro residues). Composition is skewed to low complexity over residues 978–988 (SPGSRGPIGIR) and 1098–1129 (SIGL…AGPD). One can recognise a Collagen-like 4 domain in the interval 986–1043 (GIRGPKGRRGPRGPDGVPGEIGTEGKKGPDGPPGKIGFPGHAGKIGESGEVGPKGFPG). 3 stretches are compositionally biased toward basic and acidic residues: residues 1131–1158 (TKGE…KDGP), 1170–1182 (PEGK…ERGK), and 1257–1267 (AKGEQGDDGKV). In terms of domain architecture, Collagen-like 5 spans 1269–1326 (GPTGAPGLRGPVGKRGDRGEPGDPGYVGQQGVDGLRGKPGAPGLPGDPGPRGTQGPKG). Composition is skewed to low complexity over residues 1334–1349 (KGKQ…RGSP) and 1396–1409 (LPGK…VGVI). Collagen-like domains follow at residues 1446-1503 (GPQG…GLAG) and 1497-1549 (GRGG…PPGI). A compositionally biased stretch (pro residues) spans 1537–1546 (PRGPPGLPGP). A propeptide spans 1551–1783 (LAMNQDFGLG…HLEVGPVCFL (233 aa)) (C-terminal propeptide). One can recognise a Fibrillar collagen NC1 domain in the interval 1589 to 1783 (PEILRTLDYL…HLEVGPVCFL (195 aa)). Cystine bridges form between Cys-1619-Cys-1651, Cys-1660-Cys-1781, and Cys-1696-Cys-1734. Residues Asp-1637, Asn-1639, Cys-1642, and Asp-1645 each contribute to the Ca(2+) site. Asn-1698 carries N-linked (GlcNAc...) asparagine glycosylation.

Belongs to the fibrillar collagen family. Expressed dynamically in the notochord from late epiboly, spreading to the anterior notochord by 24 hpf, and then throughout the notochord by 30 hpf. Subsequently, notochordal expression becomes restricted to the distal tip of the tail by 48 hpf and is no longer detectable by 72 hpf. Also expressed throughout the floor plate and hypochord at 24 hpf, and in forming head cartilages and the first forming tooth.

The protein resides in the secreted. It localises to the extracellular space. It is found in the extracellular matrix. Its function is as follows. May play a role during the calcification of cartilage and the transition of cartilage to bone. Together with col27a1b, plays a role in development of the notochord and axial skeleton. The polypeptide is Collagen alpha-1(XXVII) chain A (Danio rerio (Zebrafish)).